Here is a 492-residue protein sequence, read N- to C-terminus: Differentially expressed in FDCP 8 homolog (492 aa).

Residues 38–51 (GLGGSGSTGSGSEA) show a composition bias toward gly residues. The tract at residues 38-62 (GLGGSGSTGSGSEAGGSEESGPQGA) is disordered. 2 consecutive Phorbol-ester/DAG-type zinc fingers follow at residues 161–214 (PHHG…KRVC) and 400–453 (DHIR…NMIC). A disordered region spans residues 468-492 (RMKSTEDDDDDDDGVATDDDVTAAE). Residues 473 to 492 (EDDDDDDDGVATDDDVTAAE) show a composition bias toward acidic residues.

This sequence belongs to the DEF8 family.

This is Differentially expressed in FDCP 8 homolog from Drosophila melanogaster (Fruit fly).